We begin with the raw amino-acid sequence, 574 residues long: DNA polymerase alpha subunit B (574 aa).

It belongs to the DNA polymerase alpha subunit B family. As to quaternary structure, component of the alpha DNA polymerase complex (also known as the alpha DNA polymerase-primase complex) consisting of four subunits: the catalytic subunit pol1, the accessory subunit spb70/pol12, and the primase complex subunits spp1/pri1 and spp2/pri2 respectively. Interacts with orc1. Interacts with orc2; the interaction occurs on the chromatin, is stable thoughout the cell cycle and is independent from spb70 role in the alpha DNA polymerase complex. In terms of processing, phosphorylated in a cell cycle-dependent manner.

The protein resides in the nucleus. Its subcellular location is the chromosome. In terms of biological role, accessory subunit of the DNA polymerase alpha complex (also known as the alpha DNA polymerase-primase complex) which plays an essential role in the initiation of DNA synthesis. During the S phase of the cell cycle, the DNA polymerase alpha complex (composed of a catalytic subunit pol1, an accessory subunit spb70/pol12 and two primase subunits, the catalytic subunit spp1/pri1 and the regulatory subunit spp2/pri2) is recruited to DNA at the replicative forks. The primase subunit of the polymerase alpha complex initiates DNA synthesis by oligomerising short RNA primers on both leading and lagging strands. This Schizosaccharomyces pombe (strain 972 / ATCC 24843) (Fission yeast) protein is DNA polymerase alpha subunit B.